We begin with the raw amino-acid sequence, 184 residues long: Photosystem I assembly protein Ycf4 (184 aa).

2 helical membrane passes run L22–S42 and I64–I84.

Belongs to the Ycf4 family.

It localises to the plastid. The protein resides in the chloroplast thylakoid membrane. In terms of biological role, seems to be required for the assembly of the photosystem I complex. In Angiopteris evecta (Mule's foot fern), this protein is Photosystem I assembly protein Ycf4.